Reading from the N-terminus, the 541-residue chain is Glucose-6-phosphate isomerase (541 aa).

The Proton donor role is filled by Glu-346. Residues His-377 and Lys-506 contribute to the active site.

This sequence belongs to the GPI family.

The protein resides in the cytoplasm. It carries out the reaction alpha-D-glucose 6-phosphate = beta-D-fructose 6-phosphate. It functions in the pathway carbohydrate biosynthesis; gluconeogenesis. The protein operates within carbohydrate degradation; glycolysis; D-glyceraldehyde 3-phosphate and glycerone phosphate from D-glucose: step 2/4. Catalyzes the reversible isomerization of glucose-6-phosphate to fructose-6-phosphate. The chain is Glucose-6-phosphate isomerase from Rhizobium rhizogenes (strain K84 / ATCC BAA-868) (Agrobacterium radiobacter).